A 797-amino-acid chain; its full sequence is Ribosome biogenesis protein BOP1 homolog (797 aa).

Disordered regions lie at residues 22–112 and 149–177; these read LVPS…GGGP and SICA…RNTV. Residues 61–73 are compositionally biased toward low complexity; that stretch reads AGAAAAAVEGTAA. The segment covering 74-87 has biased composition (acidic residues); sequence PEDEAADNSSEEDA. A compositionally biased stretch (gly residues) spans 90-112; the sequence is GSHGEGAGEGGGSGTWPGNGGGP. WD repeat units follow at residues 462–502, 504–544, 581–623, 626–664, 667–706, 710–749, and 766–797; these read GHMG…CWRT, VLEG…EEAE, RLRF…SQNP, KNRG…LAKK, GGGG…KPYK, YHSA…DLLT, and TASE…LYCN.

It belongs to the WD repeat BOP1/ERB1 family.

The protein resides in the nucleus. It localises to the nucleolus. The protein localises to the nucleoplasm. Functionally, required for maturation of ribosomal RNAs and formation of the large ribosomal subunit. This is Ribosome biogenesis protein BOP1 homolog from Chlamydomonas reinhardtii (Chlamydomonas smithii).